The primary structure comprises 299 residues: Lysine exporter LysO (299 aa).

A run of 8 helical transmembrane segments spans residues 1 to 21 (MFSG…IPLR), 31 to 51 (QLLS…LAFL), 58 to 78 (LLAI…CNIA), 109 to 129 (LKLC…LAFL), 131 to 151 (HATE…GIQL), 169 to 189 (IVAV…AFIL), 207 to 227 (SLSG…AAFF), and 277 to 297 (PAAI…IAFF).

It belongs to the LysO family.

The protein localises to the cell inner membrane. In terms of biological role, mediates export of lysine. The chain is Lysine exporter LysO from Escherichia coli (strain K12).